Reading from the N-terminus, the 206-residue chain is Dephospho-CoA kinase (206 aa).

Residues 4–200 (TVALTGGIGS…ASYLKLASQF (197 aa)) form the DPCK domain. Residue 12 to 17 (GSGKST) participates in ATP binding.

This sequence belongs to the CoaE family.

The protein resides in the cytoplasm. The enzyme catalyses 3'-dephospho-CoA + ATP = ADP + CoA + H(+). It participates in cofactor biosynthesis; coenzyme A biosynthesis; CoA from (R)-pantothenate: step 5/5. Catalyzes the phosphorylation of the 3'-hydroxyl group of dephosphocoenzyme A to form coenzyme A. This is Dephospho-CoA kinase from Salmonella choleraesuis (strain SC-B67).